We begin with the raw amino-acid sequence, 81 residues long: ATP synthase subunit c, chloroplastic (81 aa).

The next 2 membrane-spanning stretches (helical) occupy residues 3–23 and 57–77; these read PLIP…ASIG and LAFM…LLFA.

It belongs to the ATPase C chain family. As to quaternary structure, F-type ATPases have 2 components, F(1) - the catalytic core - and F(0) - the membrane proton channel. F(1) has five subunits: alpha(3), beta(3), gamma(1), delta(1), epsilon(1). F(0) has four main subunits: a(1), b(1), b'(1) and c(10-14). The alpha and beta chains form an alternating ring which encloses part of the gamma chain. F(1) is attached to F(0) by a central stalk formed by the gamma and epsilon chains, while a peripheral stalk is formed by the delta, b and b' chains.

The protein localises to the plastid. It localises to the chloroplast thylakoid membrane. In terms of biological role, f(1)F(0) ATP synthase produces ATP from ADP in the presence of a proton or sodium gradient. F-type ATPases consist of two structural domains, F(1) containing the extramembraneous catalytic core and F(0) containing the membrane proton channel, linked together by a central stalk and a peripheral stalk. During catalysis, ATP synthesis in the catalytic domain of F(1) is coupled via a rotary mechanism of the central stalk subunits to proton translocation. Key component of the F(0) channel; it plays a direct role in translocation across the membrane. A homomeric c-ring of between 10-14 subunits forms the central stalk rotor element with the F(1) delta and epsilon subunits. In Cycas taitungensis (Prince sago), this protein is ATP synthase subunit c, chloroplastic.